The following is a 380-amino-acid chain: MEQELNRLGVLAHSATDAQRKRLVENLRDLMISLETIDDTLERIVHTPFEIDGAKIGVNLGIFRTLTQSDASMDAETLAKMTGADPDLLVRLLRYFASARMIAEHGSDSFAANKVTRALASAKGESYVDVFYEMVLPTIHELPNFLERTHYRNPTDRYHLSFQDAFNWEGDLFTFFEADPHRQVLFNRHMQLQRSSITNWGTMATLLATNQSPDAVLLVDIGGGVGHQCERIRANCPNIQGRLILQDLPEVMKNALPIPGVEAMAHNVFEPQPIKGAKFYYLRGVLHDFPDDQCKEILRGIVGAMGVDSTLVIDEMILPDRNINWQATVMDLQMMANFGSQERTRSHWVRLIESTGLMLRDVLYHGLDEYQGLIIAVKTM.

S-adenosyl-L-methionine is bound by residues 222–223, aspartate 247, and arginine 283; that span reads GG. The active-site Proton acceptor is histidine 287.

This sequence belongs to the class I-like SAM-binding methyltransferase superfamily. Cation-independent O-methyltransferase family. COMT subfamily.

It functions in the pathway secondary metabolite biosynthesis. Nonribosomal peptide synthetase that mediates the biosynthesis of usterphenyllins and uscandidusins, p-terphenyl derivatives. Within the pathway, ucdC catalyzes O-methylation of the terphenyl triol intermediate produced by ucdB to yield terphenyllin carrying two methoxy moieties at C-9 and C-12. The pathway begin with the biosynthesis of 4-hydroxyphenylpyruvate (HPPA) from L-tyrosine, possibly by the aminotransferase ucdG. The nonribosomal peptide synthetase ucdA then condenses two HPPA units to produce atromentin. The key step in this pathway is the reduction and dehydration of atromentin to form a terphenyl triol intermediate, performed by the NAD-dependent dehydrogenase ucdB. Further O-methylation by the methyltransferase ucdC forms terphenyllin carrying two methoxy moieties at C-9 and C-12, and subsequent dihydroxylation at C-3 of ring A and C-15 of ring C by the flavin-dependent oxygenase ucdD leads to 3,15-dihydroxyterphenyllin. Prenylation by ucdE at position C-5 of ring A forms usterphenyllin B, and is followed by a second prenylation at position C-14 of ring C to form usterphenyllin A. The following furan ring formation that leads to uscandidusins A and B was proven to be an unexpected spontaneous non-enzymatic reaction. The polypeptide is O-methyltransferase ucdC (Aspergillus ustus).